We begin with the raw amino-acid sequence, 401 residues long: Phosphoglycerate kinase, cytosolic (401 aa).

(2R)-3-phosphoglycerate is bound by residues Val-24, Asp-25, Asn-27, Arg-41, Ser-63, His-64, Gly-66, Arg-67, Arg-122, His-154, and Arg-155. Gly-200 is an ADP binding site. Gly-200 contacts CDP. AMP-binding residues include Lys-202 and Lys-206. An ATP-binding site is contributed by Lys-206. Position 224 (Gly-224) interacts with ADP. A CDP-binding site is contributed by Gly-224. Residues Gly-225 and Gly-297 each contribute to the AMP site. ATP contacts are provided by Gly-225 and Gly-297. CDP-binding residues include Gly-322 and Phe-327. ADP is bound at residue Phe-327. Residue Glu-328 coordinates AMP. ATP contacts are provided by Glu-328, Asp-359, and Ser-360. Asp-359 lines the Mg(2+) pocket.

This sequence belongs to the phosphoglycerate kinase family. As to quaternary structure, monomer. The cofactor is Mg(2+).

The protein localises to the cytoplasm. The enzyme catalyses (2R)-3-phosphoglycerate + ATP = (2R)-3-phospho-glyceroyl phosphate + ADP. The protein operates within carbohydrate degradation; glycolysis; pyruvate from D-glyceraldehyde 3-phosphate: step 2/5. In Nicotiana tabacum (Common tobacco), this protein is Phosphoglycerate kinase, cytosolic.